Consider the following 197-residue polypeptide: Phospholipid hydroperoxide glutathione peroxidase (197 aa).

Ser40 bears the Phosphoserine mark. Residue Sec73 is part of the active site. Position 73 (Sec73) is a non-standard amino acid, selenocysteine.

Belongs to the glutathione peroxidase family. Monomer. Has a tendency to form higher mass oligomers. Interacts with FUNDC1; this interaction promotes GPX4 recruitment into mitochondria through TOM/TIM complex where it is degraded by mitophagy. In terms of tissue distribution, expressed in testis. Also expressed in liver, lung, kidney and spinal cord.

The protein resides in the mitochondrion. The protein localises to the cytoplasm. The catalysed reaction is a hydroperoxy polyunsaturated fatty acid + 2 glutathione = a hydroxy polyunsaturated fatty acid + glutathione disulfide + H2O. It carries out the reaction 2 glutathione + H2O2 = glutathione disulfide + 2 H2O. It catalyses the reaction tert-butyl hydroperoxide + 2 glutathione = tert-butanol + glutathione disulfide + H2O. The enzyme catalyses cumene hydroperoxide + 2 glutathione = 2-phenylpropan-2-ol + glutathione disulfide + H2O. The catalysed reaction is (9S)-hydroperoxy-(10E,12Z)-octadecadienoate + 2 glutathione = (9S)-hydroxy-(10E,12Z)-octadecadienoate + glutathione disulfide + H2O. It carries out the reaction (13S)-hydroperoxy-(9Z,11E)-octadecadienoate + 2 glutathione = (13S)-hydroxy-(9Z,11E)-octadecadienoate + glutathione disulfide + H2O. It catalyses the reaction (5S)-hydroperoxy-(6E,8Z,11Z,14Z)-eicosatetraenoate + 2 glutathione = (5S)-hydroxy-(6E,8Z,11Z,14Z)-eicosatetraenoate + glutathione disulfide + H2O. The enzyme catalyses (12R)-hydroperoxy-(5Z,8Z,10E,14Z)-eicosatetraenoate + 2 glutathione = (12R)-hydroxy-(5Z,8Z,10E,14Z)-eicosatetraenoate + glutathione disulfide + H2O. The catalysed reaction is (12S)-hydroperoxy-(5Z,8Z,10E,14Z)-eicosatetraenoate + 2 glutathione = (12S)-hydroxy-(5Z,8Z,10E,14Z)-eicosatetraenoate + glutathione disulfide + H2O. It carries out the reaction (15S)-hydroperoxy-(5Z,8Z,11Z,13E)-eicosatetraenoate + 2 glutathione = (15S)-hydroxy-(5Z,8Z,11Z,13E)-eicosatetraenoate + glutathione disulfide + H2O. It catalyses the reaction (5S)-hydroperoxy-(6E,8Z,11Z,14Z,17Z)-eicosapentaenoate + 2 glutathione = (5S)-hydroxy-(6E,8Z,11Z,14Z,17Z)-eicosapentaenoate + glutathione disulfide + H2O. The enzyme catalyses (12S)-hydroperoxy-(5Z,8Z,10E,14Z,17Z)-eicosapentaenoate + 2 glutathione = (12S)-hydroxy-(5Z,8Z,10E,14Z,17Z)-eicosapentaenoate + glutathione disulfide + H2O. The catalysed reaction is (15S)-hydroperoxy-(5Z,8Z,11Z,13E,17Z)-eicosapentaenoate + 2 glutathione = (15S)-hydroxy-(5Z,8Z,11Z,13E,17Z)-eicosapentaenoate + glutathione disulfide + H2O. It carries out the reaction (15S)-hydroperoxy-(11Z,13E)-eicosadienoate + 2 glutathione = (15S)-hydroxy-(11Z,13E)-eicosadienoate + glutathione disulfide + H2O. It catalyses the reaction (17S)-hydroperoxy-(4Z,7Z,10Z,13Z,15E,19Z)-docosahexaenoate + 2 glutathione = (17S)-hydroxy-(4Z,7Z,10Z,13Z,15E,19Z)-docosahexaenoate + glutathione disulfide + H2O. The enzyme catalyses a hydroperoxy-1,2-diacyl-glycero-3-phosphocholine + 2 glutathione = a hydroxy-1,2-diacyl-glycero-3-phosphocholine + glutathione disulfide + H2O. Its function is as follows. Essential antioxidant peroxidase that directly reduces phospholipid hydroperoxide even if they are incorporated in membranes and lipoproteins. Can also reduce fatty acid hydroperoxide, cholesterol hydroperoxide and thymine hydroperoxide. Plays a key role in protecting cells from oxidative damage by preventing membrane lipid peroxidation. Required to prevent cells from ferroptosis, a non-apoptotic cell death resulting from an iron-dependent accumulation of lipid reactive oxygen species. The presence of selenocysteine (Sec) versus Cys at the active site is essential for life: it provides resistance to overoxidation and prevents cells against ferroptosis. The presence of Sec at the active site is also essential for the survival of a specific type of parvalbumin-positive interneurons, thereby preventing against fatal epileptic seizures. May be required to protect cells from the toxicity of ingested lipid hydroperoxides. Required for normal sperm development and male fertility. Essential for maturation and survival of photoreceptor cells. Plays a role in a primary T-cell response to viral and parasitic infection by protecting T-cells from ferroptosis and by supporting T-cell expansion. Plays a role of glutathione peroxidase in platelets in the arachidonic acid metabolism. Reduces hydroperoxy ester lipids formed by a 15-lipoxygenase that may play a role as down-regulator of the cellular 15-lipoxygenase pathway. Can also reduce small soluble hydroperoxides such as H2O2, cumene hydroperoxide and tert-butyl hydroperoxide. This chain is Phospholipid hydroperoxide glutathione peroxidase, found in Callithrix jacchus (White-tufted-ear marmoset).